We begin with the raw amino-acid sequence, 507 residues long: Beta-glucosidase 12 (507 aa).

The first 22 residues, 1 to 22, serve as a signal peptide directing secretion; sequence MRTIYLSLLVFIIVLALNEVMA. Residue Gln50 coordinates a beta-D-glucoside. Asn81 carries N-linked (GlcNAc...) asparagine glycosylation. A beta-D-glucoside-binding positions include His154 and 199–200; that span reads NE. Residue Glu200 is the Proton donor of the active site. An intrachain disulfide couples Cys219 to Cys227. Asn226 carries N-linked (GlcNAc...) asparagine glycosylation. Residue Tyr344 coordinates a beta-D-glucoside. Residue Asn358 is glycosylated (N-linked (GlcNAc...) asparagine). Residues Glu414, Trp459, 466–467, and Phe475 each bind a beta-D-glucoside; that span reads EW. The active-site Nucleophile is Glu414.

The protein belongs to the glycosyl hydrolase 1 family.

The catalysed reaction is Hydrolysis of terminal, non-reducing beta-D-glucosyl residues with release of beta-D-glucose.. This Arabidopsis thaliana (Mouse-ear cress) protein is Beta-glucosidase 12.